The following is a 697-amino-acid chain: MSHVAVENVLNLDQQFAGLDLNSADAESGVAGTKGRYIPPHLRNKEASRNDSNWDSGRGGNGYINGMQDDRDGRMNGYDRGGYGSRGTGRSDRGFYDRENSGWNSGRDKDAYSSFGSRGDRGKGSLFNERGSGSRRTDDRRQDGFDGMGNRSDKSGFGRFDRGNSRWSDDRNDEDDWSKPLAPNDRVEQELFSGSNTGINFEKYDDIPVEATGSNCPPHIESFHDVTMGEIIMGNIQLTRYTRPTPVQKHAIPIIIEKRDLMACAQTGSGKTAAFLLPILSQIYADGPGDAMKHLQENGRYGRRKQFPLSLVLAPTRELAVQIYEEARKFAYRSRVRPCVVYGGADIGQQIRDLERGCHLLVATPGRLVDMMERGKIGLDFCKYLVLDEADRMLDMGFEPQIRRIVEQDTMPPKGVRQTMMFSATFPKEIQILARDFLDEYIFLAVGRVGSTSENITQKVVWVEEMDKRSFLLDLLNATGKDSLTLVFVETKKGADALEDFLYHEGYACTSIHGDRSQRDREEALHQFRSGKSPILVATAVAARGLDISNVKHVINFDLPSDIEEYVHRIGRTGRVGNLGLATSFFNEKNINITKDLLDLLVEAKQEVPSWLENMAYEQHHKSSSRGRSKSRFSGGFGAKDYRQSSGAGSSFGSSRGGRSSGHGGSRGFGGGYGGFYNSDGYGGNYGGSSQVDWWGN.

The tract at residues 27-189 (ESGVAGTKGR…PLAPNDRVEQ (163 aa)) is disordered. 3 stretches are compositionally biased toward basic and acidic residues: residues 89–111 (GRSD…DKDA), 135–144 (RRTDDRRQDG), and 151–170 (RSDK…WSDD). The Q motif motif lies at 221 to 249 (ESFHDVTMGEIIMGNIQLTRYTRPTPVQK). Residues 241 to 248 (YTRPTPVQ) and 265 to 272 (AQTGSGKT) contribute to the ATP site. Residues 252–444 (IPIIIEKRDL…RDFLDEYIFL (193 aa)) enclose the Helicase ATP-binding domain. The DEAD box signature appears at 388-391 (DEAD). The Helicase C-terminal domain occupies 455–616 (NITQKVVWVE…EVPSWLENMA (162 aa)). The tract at residues 619 to 666 (QHHKSSSRGRSKSRFSGGFGAKDYRQSSGAGSSFGSSRGGRSSGHGGS) is disordered. The span at 622 to 631 (KSSSRGRSKS) shows a compositional bias: basic residues. Low complexity predominate over residues 645–654 (SSGAGSSFGS). The segment covering 655-666 (SRGGRSSGHGGS) has biased composition (gly residues).

It belongs to the DEAD box helicase family. DDX3/DED1 subfamily.

The protein localises to the cell membrane. It is found in the nucleus. It localises to the cytoplasm. The protein resides in the stress granule. Its subcellular location is the inflammasome. The protein localises to the cell projection. It is found in the lamellipodium. The catalysed reaction is ATP + H2O = ADP + phosphate + H(+). Multifunctional ATP-dependent RNA helicase. The ATPase activity can be stimulated by various ribo-and deoxynucleic acids indicative for a relaxed substrate specificity. In vitro can unwind partially double-stranded DNA with a preference for 5'-single-stranded DNA overhangs. Involved in many cellular processes, which do not necessarily require its ATPase/helicase catalytic activities. Involved in the regulation of transcription and translation initiation. Involved in innate immunity. Involved in both stress and inflammatory responses. May negatively regulate extrinsic apoptotic signaling pathway via death domain receptors. May be involved in mitotic chromosome segregation. Required for canonical Wnt signaling involved in anteroposterior neural patterning. The protein is Putative ATP-dependent RNA helicase an3 (an3) of Xenopus laevis (African clawed frog).